The primary structure comprises 185 residues: Photosystem I assembly protein Ycf4 (185 aa).

2 helical membrane passes run 24-44 and 66-86; these read YIIGGMLTIGGIGFLLASISS and IIMGAYGVVANLLNFYLWYMV.

The protein belongs to the Ycf4 family.

It localises to the cellular thylakoid membrane. Its function is as follows. Seems to be required for the assembly of the photosystem I complex. In Prochlorococcus marinus (strain MIT 9312), this protein is Photosystem I assembly protein Ycf4.